Consider the following 337-residue polypeptide: Cytoskeleton protein RodZ (337 aa).

Residues 1–111 (MNTEATHDQN…LGKRRKKRDG (111 aa)) are Cytoplasmic-facing. One can recognise an HTH cro/C1-type domain in the interval 19–71 (LRNAREQLGLSQQAVAERLCLKVSTVRDIEEDKAPADLASTFLRGYIRSYARL). Residues 30 to 49 (QQAVAERLCLKVSTVRDIEE) constitute a DNA-binding region (H-T-H motif). The helical; Signal-anchor for type II membrane protein transmembrane segment at 112-132 (WLMTFTWLVLFVVIGLSGAWW) threads the bilayer. The Periplasmic portion of the chain corresponds to 133-337 (WQDRKAQQEE…TLNAEQSPAQ (205 aa)). Residues 144–167 (TTMADQSSAELSSNSEQGQSVPLN) show a composition bias toward polar residues. Residues 144 to 235 (TTMADQSSAE…PTAATTPDGA (92 aa)) form a disordered region. The segment covering 168 to 207 (TSTTTDPATTSTPPASVDTTATNTQTPAVTAPAPAVDPQQ) has biased composition (low complexity). Positions 208–218 (NAVVSPSQANV) are enriched in polar residues. Residues 219 to 235 (DTAATPAPTAATTPDGA) are compositionally biased toward low complexity.

The protein belongs to the RodZ family.

The protein resides in the cell inner membrane. Functionally, cytoskeletal protein that is involved in cell-shape control through regulation of the length of the long axis. The protein is Cytoskeleton protein RodZ of Escherichia coli (strain K12 / MC4100 / BW2952).